We begin with the raw amino-acid sequence, 216 residues long: Small ribosomal subunit protein uS2 (216 aa).

The protein belongs to the universal ribosomal protein uS2 family.

This is Small ribosomal subunit protein uS2 from Carsonella ruddii (strain PV).